The sequence spans 292 residues: NAD kinase (292 aa).

The Proton acceptor role is filled by D73. Residues 73–74 (DG), 147–148 (NE), H158, R175, D177, 188–193 (TAYSLS), and Q247 contribute to the NAD(+) site.

This sequence belongs to the NAD kinase family. Requires a divalent metal cation as cofactor.

It is found in the cytoplasm. The enzyme catalyses NAD(+) + ATP = ADP + NADP(+) + H(+). In terms of biological role, involved in the regulation of the intracellular balance of NAD and NADP, and is a key enzyme in the biosynthesis of NADP. Catalyzes specifically the phosphorylation on 2'-hydroxyl of the adenosine moiety of NAD to yield NADP. This is NAD kinase from Sodalis glossinidius (strain morsitans).